The following is a 305-amino-acid chain: Ribonuclease BN (305 aa).

The Zn(2+) site is built by His64, His66, Asp68, His69, His141, Asp212, and His270. Asp68 acts as the Proton acceptor in catalysis.

Belongs to the RNase Z family. RNase BN subfamily. As to quaternary structure, homodimer. Requires Zn(2+) as cofactor.

Its function is as follows. Zinc phosphodiesterase, which has both exoribonuclease and endoribonuclease activities. This chain is Ribonuclease BN, found in Salmonella paratyphi C (strain RKS4594).